Consider the following 334-residue polypeptide: MRLLSLLTFSLFAVIGLAPAAQAKDKLTIYTYDSFVSEWGPGPKVKENFEKECDCEVNFVASADGVALLNRLKLEGSKTAADIVLGLDTNLTTEARASGFFAPSGIDQTNVKVPGNFKDDIFVPYDYGYFAVVYDSEKLPNPPKSLKELVEGDPAQKIVLQDPRTATPGLGMLLWMKSVYGDEAGAAWQKLQKRVLTVTPGWSEAYGLFTKGEAPMVLSYTTSPAYHMVVEKTDRYKALAYPEGNYLQIELAAQTTTGAKNPLAKKFLAFMTGPGFQDLIPETNWMFPAGKTSKPLPAAFDALPKPEKTLLIPPYEVAKNRRLWVNEWLAATSR.

The first 23 residues, 1–23, serve as a signal peptide directing secretion; it reads MRLLSLLTFSLFAVIGLAPAAQA. Residues 64–65, 166–167, Trp202, and 220–223 each bind thiamine; these read DG, AT, and YTTS.

Belongs to the bacterial solute-binding protein 1 family. As to quaternary structure, the complex is composed of two ATP-binding proteins (ThiQ), two transmembrane proteins (ThiP) and a solute-binding protein (ThiB).

It is found in the periplasm. Functionally, part of the ABC transporter complex ThiBPQ involved in thiamine import. The sequence is that of Thiamine-binding periplasmic protein (thiB) from Brucella abortus biovar 1 (strain 9-941).